Here is a 677-residue protein sequence, read N- to C-terminus: DNA ligase (677 aa).

NAD(+) is bound by residues 35–39 (DAEFD), 85–86 (SL), and Glu110. The active-site N6-AMP-lysine intermediate is Lys112. Positions 133 and 173 each coordinate NAD(+). The tract at residues 189–210 (QKEGGKPFANPRNAAAGSLRQK) is disordered. 2 residues coordinate NAD(+): Lys289 and Lys313. Zn(2+) is bound by residues Cys407, Cys410, Cys426, and Cys432. In terms of domain architecture, BRCT spans 596-677 (IPDQVLEGLT…FKQLLANGTV (82 aa)).

Belongs to the NAD-dependent DNA ligase family. LigA subfamily. It depends on Mg(2+) as a cofactor. Requires Mn(2+) as cofactor.

It catalyses the reaction NAD(+) + (deoxyribonucleotide)n-3'-hydroxyl + 5'-phospho-(deoxyribonucleotide)m = (deoxyribonucleotide)n+m + AMP + beta-nicotinamide D-nucleotide.. DNA ligase that catalyzes the formation of phosphodiester linkages between 5'-phosphoryl and 3'-hydroxyl groups in double-stranded DNA using NAD as a coenzyme and as the energy source for the reaction. It is essential for DNA replication and repair of damaged DNA. This is DNA ligase from Corynebacterium diphtheriae (strain ATCC 700971 / NCTC 13129 / Biotype gravis).